Reading from the N-terminus, the 54-residue chain is MPQLEFTWWIINFFIVWTADFTLLIVLSIPNLSTPTTLSKQLDINKSHVTWQWS.

The chain crosses the membrane as a helical span at residues 9–29; sequence WIINFFIVWTADFTLLIVLSI.

It belongs to the ATPase protein 8 family. In terms of assembly, F-type ATPases have 2 components, CF(1) - the catalytic core - and CF(0) - the membrane proton channel.

Its subcellular location is the mitochondrion membrane. Its function is as follows. Mitochondrial membrane ATP synthase (F(1)F(0) ATP synthase or Complex V) produces ATP from ADP in the presence of a proton gradient across the membrane which is generated by electron transport complexes of the respiratory chain. F-type ATPases consist of two structural domains, F(1) - containing the extramembraneous catalytic core and F(0) - containing the membrane proton channel, linked together by a central stalk and a peripheral stalk. During catalysis, ATP synthesis in the catalytic domain of F(1) is coupled via a rotary mechanism of the central stalk subunits to proton translocation. Part of the complex F(0) domain. Minor subunit located with subunit a in the membrane. This chain is ATP synthase protein 8 (MT-ATP8), found in Arbacia lixula (Black urchin).